Reading from the N-terminus, the 457-residue chain is Zinc finger protein ZIPIC (457 aa).

One can recognise a ZAD domain in the interval 3-84 (CCICQFSVRV…ILELIHSPYM (82 aa)). C2H2-type zinc fingers lie at residues 257 to 280 (IQCP…KREH), 284 to 306 (YVCD…LQNH), 312 to 334 (FACP…MAWH), 340 to 362 (YQCD…KMIH), 369 to 391 (LECQ…MRSH), and 397 to 419 (FACP…LREH). Residues 430 to 448 (FHCSKCTHTFINEQNYDAH) form a C2H2-type 7; degenerate zinc finger.

As to quaternary structure, interacts (via region between the ZAD domain and the first zinc finger domain) with Cp190 (via centrosomal targeting M domain); the interaction is direct. Interacts with pita.

The protein localises to the nucleus. It is found in the chromosome. Functionally, insulator DNA-binding protein. Recruits Cp190 and cooperatively binds to chromatin promoter regions to exert transcriptional regulator and chromatin insulator functions. Chromatin insulators are regulatory elements that establish independent domains of transcriptional activity within eukaryotic genomes. Insulators are proposed to structure the chromatin fiber into independent domains of differing transcriptional potential by promoting the formation of distinct chromatin loops to form topologically associating domains (TADs). Chromatin binding sites often cluster with those of other insulator DNA-binding proteins such as pita, CTCF and BEAF-32, but not Su(Hw). This is Zinc finger protein ZIPIC from Drosophila melanogaster (Fruit fly).